The sequence spans 274 residues: NADPH-dependent 7-cyano-7-deazaguanine reductase (274 aa).

Position 80–82 (80–82 (VES)) interacts with substrate. An NADPH-binding site is contributed by 82-83 (SK). Cys181 (thioimide intermediate) is an active-site residue. Asp188 serves as the catalytic Proton donor. 220–221 (HE) is a binding site for substrate. 249 to 250 (RG) is an NADPH binding site.

This sequence belongs to the GTP cyclohydrolase I family. QueF type 2 subfamily. As to quaternary structure, homodimer.

The protein localises to the cytoplasm. It carries out the reaction 7-aminomethyl-7-carbaguanine + 2 NADP(+) = 7-cyano-7-deazaguanine + 2 NADPH + 3 H(+). It participates in tRNA modification; tRNA-queuosine biosynthesis. Its function is as follows. Catalyzes the NADPH-dependent reduction of 7-cyano-7-deazaguanine (preQ0) to 7-aminomethyl-7-deazaguanine (preQ1). In Burkholderia pseudomallei (strain 1106a), this protein is NADPH-dependent 7-cyano-7-deazaguanine reductase.